Reading from the N-terminus, the 157-residue chain is Small ribosomal subunit protein uS9 (157 aa).

This sequence belongs to the universal ribosomal protein uS9 family.

The sequence is that of Small ribosomal subunit protein uS9 from Caulobacter vibrioides (strain ATCC 19089 / CIP 103742 / CB 15) (Caulobacter crescentus).